A 281-amino-acid polypeptide reads, in one-letter code: Peptidyl-prolyl cis-trans isomerase CYP28, chloroplastic (281 aa).

The N-terminal 24 residues, 1 to 24 (MASSSILIPPILTRRNLLLSTTIA), are a transit peptide targeting the chloroplast. The PPIase cyclophilin-type domain maps to 66 to 268 (STTPCSDSTP…KTVFISGCGE (203 aa)).

Belongs to the cyclophilin-type PPIase family. In terms of processing, S-nytrosylated during the hypersensitive disease resistance response. Ubiquitous. Not detected in roots.

The protein localises to the plastid. The protein resides in the chloroplast. It catalyses the reaction [protein]-peptidylproline (omega=180) = [protein]-peptidylproline (omega=0). PPIases accelerate the folding of proteins. It catalyzes the cis-trans isomerization of proline imidic peptide bonds in oligopeptides. This is Peptidyl-prolyl cis-trans isomerase CYP28, chloroplastic (CYP28) from Arabidopsis thaliana (Mouse-ear cress).